A 223-amino-acid polypeptide reads, in one-letter code: UPF0441 protein YgiB (223 aa).

The segment covering 178–195 (TVPKTAMAPKPATTTTVT) has biased composition (low complexity). A disordered region spans residues 178 to 223 (TVPKTAMAPKPATTTTVTRGGFGESVAKQSTMQRSATGTSSRSMGG). Positions 204–223 (AKQSTMQRSATGTSSRSMGG) are enriched in polar residues.

This sequence belongs to the UPF0441 family.

The chain is UPF0441 protein YgiB from Shigella flexneri serotype 5b (strain 8401).